We begin with the raw amino-acid sequence, 439 residues long: Homogentisate 1,2-dioxygenase (439 aa).

Residue H293 is the Proton acceptor of the active site. Fe cation contacts are provided by H336 and E342. The homogentisate site is built by Y351 and H372. H372 lines the Fe cation pocket.

The protein belongs to the homogentisate dioxygenase family. Hexamer; dimer of trimers. Fe cation is required as a cofactor.

It catalyses the reaction homogentisate + O2 = 4-maleylacetoacetate + H(+). Its pathway is amino-acid degradation; L-phenylalanine degradation; acetoacetate and fumarate from L-phenylalanine: step 4/6. Functionally, involved in the catabolism of homogentisate (2,5-dihydroxyphenylacetate or 2,5-OH-PhAc), a central intermediate in the degradation of phenylalanine and tyrosine. Catalyzes the oxidative ring cleavage of the aromatic ring of homogentisate to yield maleylacetoacetate. This is Homogentisate 1,2-dioxygenase from Cupriavidus necator (strain ATCC 17699 / DSM 428 / KCTC 22496 / NCIMB 10442 / H16 / Stanier 337) (Ralstonia eutropha).